A 543-amino-acid polypeptide reads, in one-letter code: EH domain-containing protein 2 (543 aa).

A phosphoserine mark is found at Ser-3 and Ser-44. Residues 55–286 enclose the Dynamin-type G domain; the sequence is FDGKPMVLVA…DLFRDIQGLP (232 aa). The segment at 65-72 is G1 motif; the sequence is GQYSTGKT. Residue 65–72 participates in ATP binding; it reads GQYSTGKT. The tract at residues 91–92 is G2 motif; that stretch reads EP. The interval 153-156 is G3 motif; that stretch reads DTPG. Residues 219–222 are G4 motif; sequence NKAD. Residue Lys-220 coordinates ATP. Residue Val-243 is a region of interest, G5 motif. Residue Trp-258 participates in ATP binding. Residues 320-340 form a mediates membrane-binding region; sequence TVFGKENKKKQLILKLPVIFA. Residues Ser-438, Ser-468, Ser-470, Ser-484, and Ser-493 each carry the phosphoserine modification. Residues 449 to 537 form the EH domain; sequence DKSKYDEIFY…RRLVPPSKRR (89 aa). Residues 481–516 form the EF-hand domain; that stretch reads LPNSVLGRIWKLSDVDRDGMLDDEEFALASHLIEAK. Ca(2+) is bound by residues Asp-494, Asp-496, Asp-498, Met-500, and Glu-505. The interval 521-543 is disordered; sequence GLPTNLPRRLVPPSKRRQKGSAE. Positions 534 to 543 are enriched in basic residues; it reads SKRRQKGSAE.

It belongs to the TRAFAC class dynamin-like GTPase superfamily. Dynamin/Fzo/YdjA family. EHD subfamily. In terms of assembly, homodimer and homooligomer. Interacts with EHD1. May also interact with EHD3 and EHD4. Interacts with MYOF. Interacts with EHBP1. Interacts with FER1L5 (via second C2 domain). Interacts with CAV1 in a cholesterol-dependent manner. Interacts (via EH domain) with PACSIN2 (via NPF motifs); this interaction probably stabilizes the caveolae. As to expression, detected in lung and adipocytes. Detected at lower levels in heart and skeletal muscle.

It is found in the cell membrane. The protein resides in the membrane. The protein localises to the caveola. Its subcellular location is the endosome membrane. It localises to the cytoplasm. It is found in the cytosol. The very low intrinsic ATPase activity is increased upon interaction with liposomes. Its function is as follows. ATP- and membrane-binding protein that controls membrane reorganization/tubulation upon ATP hydrolysis. Plays a role in membrane trafficking between the plasma membrane and endosomes. Important for the internalization of GLUT4. Required for fusion of myoblasts to skeletal muscle myotubes. Required for normal translocation of FER1L5 to the plasma membrane. Regulates the equilibrium between cell surface-associated and cell surface-dissociated caveolae by constraining caveolae at the cell membrane. In Mus musculus (Mouse), this protein is EH domain-containing protein 2.